We begin with the raw amino-acid sequence, 127 residues long: Small ribosomal subunit protein uS11 (127 aa).

Belongs to the universal ribosomal protein uS11 family. As to quaternary structure, part of the 30S ribosomal subunit. Interacts with proteins S7 and S18. Binds to IF-3.

In terms of biological role, located on the platform of the 30S subunit, it bridges several disparate RNA helices of the 16S rRNA. Forms part of the Shine-Dalgarno cleft in the 70S ribosome. This chain is Small ribosomal subunit protein uS11, found in Anaeromyxobacter sp. (strain Fw109-5).